The primary structure comprises 390 residues: Succinyl-diaminopimelate desuccinylase (390 aa).

Position 74 (His74) interacts with Zn(2+). Residue Asp76 is part of the active site. Residue Asp107 coordinates Zn(2+). Glu140 acts as the Proton acceptor in catalysis. Zn(2+)-binding residues include Glu141, Glu169, and His363.

This sequence belongs to the peptidase M20A family. DapE subfamily. As to quaternary structure, homodimer. Zn(2+) is required as a cofactor. Requires Co(2+) as cofactor.

The catalysed reaction is N-succinyl-(2S,6S)-2,6-diaminopimelate + H2O = (2S,6S)-2,6-diaminopimelate + succinate. It functions in the pathway amino-acid biosynthesis; L-lysine biosynthesis via DAP pathway; LL-2,6-diaminopimelate from (S)-tetrahydrodipicolinate (succinylase route): step 3/3. In terms of biological role, catalyzes the hydrolysis of N-succinyl-L,L-diaminopimelic acid (SDAP), forming succinate and LL-2,6-diaminopimelate (DAP), an intermediate involved in the bacterial biosynthesis of lysine and meso-diaminopimelic acid, an essential component of bacterial cell walls. The chain is Succinyl-diaminopimelate desuccinylase from Bartonella henselae (strain ATCC 49882 / DSM 28221 / CCUG 30454 / Houston 1) (Rochalimaea henselae).